A 319-amino-acid chain; its full sequence is Thioredoxin reductase (319 aa).

36–43 contacts FAD; the sequence is TGINKGGQ. Cysteine 136 and cysteine 139 are joined by a disulfide. Residue 288–297 participates in FAD binding; that stretch reads DVIDHVYRQA.

The protein belongs to the class-II pyridine nucleotide-disulfide oxidoreductase family. As to quaternary structure, homodimer. It depends on FAD as a cofactor.

The protein resides in the cytoplasm. It catalyses the reaction [thioredoxin]-dithiol + NADP(+) = [thioredoxin]-disulfide + NADPH + H(+). The chain is Thioredoxin reductase (trxB) from Buchnera aphidicola subsp. Schizaphis graminum (strain Sg).